The following is a 296-amino-acid chain: MPLPDLSTLSADQPVLIAGPTASGKSALALRIAERQGGVIVNADALQVHHAWRVLTARPSPQDEARAPHRLYGHVARGTPHSVGHWLREVTPLLSGQRPIIVGGTGLFFTALTQGLSEIPEVPAEVRARADALREGDFARMQADLGARDPETSARIDMANPMRVQRAWEVLETTGRPLARWQADTPPPLLPRSRAARFVLEAPKDWLAPRIARRFRQMLDQGALDEARAALPHWDAAAPWARAIGAPELIAHLRGEITLDAAEEAATRATRQYAKRQRTWFRARMRDWTPVPPGSA.

19–26 lines the ATP pocket; sequence GPTASGKS. Position 21–26 (21–26) interacts with substrate; sequence TASGKS.

Belongs to the IPP transferase family. As to quaternary structure, monomer. Requires Mg(2+) as cofactor.

The enzyme catalyses adenosine(37) in tRNA + dimethylallyl diphosphate = N(6)-dimethylallyladenosine(37) in tRNA + diphosphate. Functionally, catalyzes the transfer of a dimethylallyl group onto the adenine at position 37 in tRNAs that read codons beginning with uridine, leading to the formation of N6-(dimethylallyl)adenosine (i(6)A). This Dinoroseobacter shibae (strain DSM 16493 / NCIMB 14021 / DFL 12) protein is tRNA dimethylallyltransferase.